Consider the following 577-residue polypeptide: Anthranilate synthase alpha subunit 1, chloroplastic (577 aa).

A chloroplast-targeting transit peptide spans 1–34 (MASLVLSLRIAPSTPPLGLGGGRFRGRRGAVACR).

It belongs to the anthranilate synthase component I family. As to quaternary structure, heterotetramer consisting of two non-identical subunits: a beta subunit and a large alpha subunit.

The protein localises to the plastid. It is found in the chloroplast. The enzyme catalyses chorismate + L-glutamine = anthranilate + pyruvate + L-glutamate + H(+). It functions in the pathway amino-acid biosynthesis; L-tryptophan biosynthesis; L-tryptophan from chorismate: step 1/5. With respect to regulation, feedback inhibition by tryptophan. Functionally, part of a heterotetrameric complex that catalyzes the two-step biosynthesis of anthranilate, an intermediate in the biosynthesis of L-tryptophan. In the first step, the glutamine-binding beta subunit of anthranilate synthase (AS) provides the glutamine amidotransferase activity which generates ammonia as a substrate that, along with chorismate, is used in the second step, catalyzed by the large alpha subunit of AS to produce anthranilate. This is Anthranilate synthase alpha subunit 1, chloroplastic from Oryza sativa subsp. japonica (Rice).